The following is a 600-amino-acid chain: Brain-enriched guanylate kinase-associated protein (600 aa).

M1 carries the post-translational modification N-acetylmethionine. At Y137 the chain carries Phosphotyrosine. A disordered region spans residues 192–222; that stretch reads PGSLSSRMSDASARDLGYRDGVEKSGPRPPY. S200 carries the post-translational modification Phosphoserine. Over residues 203–217 the composition is skewed to basic and acidic residues; the sequence is SARDLGYRDGVEKSG. 2 positions are modified to phosphoserine: S229 and S246. T249 carries the phosphothreonine modification. At S265 the chain carries Phosphoserine. Residues 298–317 are disordered; it reads SSYSSFSATSEEKEHAQAGT. S372 carries the post-translational modification Phosphoserine. Residue R380 is modified to Asymmetric dimethylarginine. 7 positions are modified to phosphoserine: S463, S473, S483, S485, S508, S510, and S514. Residues 537 to 590 are disordered; it reads GAGSSPEPEHGSRESLEPSSMEASPEMHPPTRLSPQQAFPRTGGSGLSRKDSLT. The span at 543 to 552 shows a compositional bias: basic and acidic residues; that stretch reads EPEHGSRESL. 2 positions are modified to phosphoserine: S560 and S570.

In terms of assembly, interacts with DLG4 and DLGAP1 and forms a ternary complex.

The protein resides in the cytoplasm. The protein localises to the membrane. May sustain the structure of the postsynaptic density (PSD). This Mus musculus (Mouse) protein is Brain-enriched guanylate kinase-associated protein (Begain).